Consider the following 88-residue polypeptide: UPF0367 protein AM1_1885 (88 aa).

Belongs to the UPF0367 family.

The protein is UPF0367 protein AM1_1885 of Acaryochloris marina (strain MBIC 11017).